Consider the following 159-residue polypeptide: uncharacterized protein (159 aa).

The next 4 helical transmembrane spans lie at 22 to 42 (LFSSSLYHSAFDCSFGISFTI), 45 to 65 (PIEYIVLSKPCFFAITPLLTL), 80 to 100 (IWVSTVTSLPISHCLIVSLSL), and 104 to 124 (FPSLFYSALVLSCLSLLCLAF).

The protein localises to the membrane. This is an uncharacterized protein from Schizosaccharomyces pombe (strain 972 / ATCC 24843) (Fission yeast).